A 623-amino-acid chain; its full sequence is Leucine-rich repeat, immunoglobulin-like domain and transmembrane domain-containing protein 1 (623 aa).

The first 21 residues, 1–21 (MWVALGMLWLLALGGPHQAWS), serve as a signal peptide directing secretion. The LRRNT domain maps to 22–59 (FCPSQCSCSLHILSDGSKARTVVCSDPDLTLPPASIPP). Residues 22–526 (FCPSQCSCSL…EVVDAEGTQR (505 aa)) lie on the Lumenal side of the membrane. LRR repeat units follow at residues 60–81 (DTCK…TFRP), 84–105 (RLEQ…MLRG), 108–128 (RLRE…AALK), 132–153 (QLQL…AVHF), and 156–177 (NLTF…LLDT). The N-linked (GlcNAc...) asparagine glycan is linked to asparagine 156. Residues 201 to 253 (NPWVCDCRLYDLVHLLDGWASNLIFIEARLRCGSPRSLAGVAFSQLELRKCQS) form the LRRCT domain. An Ig-like C2-type domain is found at 266 to 332 (PLGSTVLLRC…SGDYICQAKN (67 aa)). Cysteine 275 and cysteine 328 are joined by a disulfide. N-linked (GlcNAc...) asparagine glycans are attached at residues asparagine 296 and asparagine 455. In terms of domain architecture, Fibronectin type-III spans 430–518 (MVRSLKVVGD…QCVIFSTDEV (89 aa)). The stretch at 525–548 (QRLINMVVISVAAIIALPPTLLVC) is one LRR 6 repeat. A helical membrane pass occupies residues 527 to 547 (LINMVVISVAAIIALPPTLLV). The Cytoplasmic segment spans residues 548 to 623 (CCGALRRRCH…GGRRINEYFC (76 aa)).

Homodimer. Interacts with LRIT2; may form a heterodimer with LRIT2. Interacts (via its N-terminal extracellular domain) with metabotropic glutamate receptor GRM6. Interacts (via its extreme C-terminus) with the scaffold protein FRMPD2 (via the third PDZ domain); the interaction leads to their colocalization in photoreceptor synapses. Retina, outer segments of photoreceptor cells.

It localises to the endoplasmic reticulum membrane. The protein localises to the cell projection. The protein resides in the dendrite. Its function is as follows. Photoreceptor synaptic protein essential for normal vision. Involved in synapse formation in cone photoreceptor cells. This Rattus norvegicus (Rat) protein is Leucine-rich repeat, immunoglobulin-like domain and transmembrane domain-containing protein 1 (Lrit1).